The following is a 216-amino-acid chain: Protein fmp32, mitochondrial (216 aa).

Residues 111-133 adopt a coiled-coil conformation; the sequence is RQEMVALHSQVEQLFSDVERLKT. The chain crosses the membrane as a helical span at residues 193–215; the sequence is TLQWVFGIVTGSGALLLAYVRLI.

It belongs to the CCDC90 family.

Its subcellular location is the mitochondrion. The protein localises to the membrane. In Schizosaccharomyces pombe (strain 972 / ATCC 24843) (Fission yeast), this protein is Protein fmp32, mitochondrial (fmp32).